A 72-amino-acid polypeptide reads, in one-letter code: Small ribosomal subunit protein bS18c (72 aa).

Belongs to the bacterial ribosomal protein bS18 family. Part of the 30S ribosomal subunit.

Its subcellular location is the plastid. It is found in the chloroplast. The polypeptide is Small ribosomal subunit protein bS18c (Emiliania huxleyi (Coccolithophore)).